Here is a 213-residue protein sequence, read N- to C-terminus: MEIKVDEGHQKGTKEDITRPLLEEDKDFPDIERTTWIQKAIGQTFQTTAHLANLLPTGTVLAFQLLSPIFSNGGQCDLVSKIMTSTLVAICGFSCFILSFTDSYKDKNGTICYGLATIHGFWIIDGSTTLPQELSKRYKLRFIDFVHAFMSLFVFGAVVLFDRNAVNCFFPSPSAEALEVLTALPVGVGVFSSMLFATFPTTRNGIGFPLSSK.

4 consecutive transmembrane segments (helical) span residues 51-71, 78-98, 142-162, and 180-200; these read LANL…PIFS, LVSK…CFIL, FIDF…VLFD, and VLTA…ATFP.

It belongs to the plant DMP1 protein family. Expressed in leaves, flowers and siliques, especially in vascular tissues.

It localises to the vacuole membrane. In terms of biological role, involved in membrane remodeling. This is Protein DMP4 from Arabidopsis thaliana (Mouse-ear cress).